The primary structure comprises 285 residues: MSATDLASLENAIEAAFENRDNVNVSTRGEVRDAVETALNLLDSGKVRVAERGSDGNWTVNQWLKKAVLLSFRLNDMQIVDGGPGGSTWWDKVPSKFEGWGENRFREAGFRAVPNAVVRRSAYIAPNAILMPSFVNLGAYVGEGTMVDTWATVGSCAQIGKHVHLSGGVGIGGVLEPMQAGPTIIEDNCFIGARSEVVEGCIIREGSVLGMGVFIGKSTKIVDRATGEITYGEVPPYSVVVAGALPNGNTMANGQPAPSLYCAVIVKRVDEKTRSKTGINELLRD.

Substrate is bound by residues Arg-111 and Asp-148.

This sequence belongs to the transferase hexapeptide repeat family. Homotrimer.

The protein resides in the cytoplasm. The enzyme catalyses (S)-2,3,4,5-tetrahydrodipicolinate + succinyl-CoA + H2O = (S)-2-succinylamino-6-oxoheptanedioate + CoA. The protein operates within amino-acid biosynthesis; L-lysine biosynthesis via DAP pathway; LL-2,6-diaminopimelate from (S)-tetrahydrodipicolinate (succinylase route): step 1/3. This Rhizobium rhizogenes (strain K84 / ATCC BAA-868) (Agrobacterium radiobacter) protein is 2,3,4,5-tetrahydropyridine-2,6-dicarboxylate N-succinyltransferase.